Here is a 136-residue protein sequence, read N- to C-terminus: Histone H3 (136 aa).

The interval 1 to 43 (MARTKQTARKSTGGKAPRKQLASKAARKSAPSTGGVKKPHRYK) is disordered. An N6,N6,N6-trimethyllysine; alternate mark is found at K5 and K10. Residue K5 is modified to N6,N6-dimethyllysine; alternate. K5 bears the N6-methyllysine; alternate mark. The residue at position 10 (K10) is an N6-acetyllysine; alternate. S11 carries the phosphoserine modification. K15 carries the post-translational modification N6,N6-dimethyllysine; alternate. N6-methyllysine; alternate is present on residues K15, K19, K24, K28, and K37. N6-acetyllysine; alternate is present on residues K15, K19, K24, K28, and K37. N6,N6,N6-trimethyllysine; alternate is present on residues K28 and K37. Residues K28 and K37 each carry the N6,N6-dimethyllysine; alternate modification. N6-acetyllysine is present on residues K57 and K65. An N6,N6,N6-trimethyllysine; alternate modification is found at K80. K80 carries the post-translational modification N6,N6-dimethyllysine; alternate. N6-methyllysine; alternate is present on K80.

This sequence belongs to the histone H3 family. In terms of assembly, the nucleosome is a histone octamer containing two molecules each of H2A, H2B, H3 and H4 assembled in one H3-H4 heterotetramer and two H2A-H2B heterodimers. The octamer wraps approximately 147 bp of DNA. Post-translationally, phosphorylated to form H3S10ph. H3S10ph promotes subsequent H3K14ac formation and is required for transcriptional activation through TBP recruitment to the promoters. In terms of processing, mono-, di- and trimethylated by the COMPASS complex to form H3K4me1/2/3. H3K4me activates gene expression by regulating transcription elongation and plays a role in telomere length maintenance. H3K4me enrichment correlates with transcription levels, and occurs in a 5' to 3' gradient with H3K4me3 enrichment at the 5'-end of genes, shifting to H3K4me2 and then H3K4me1. Trimethylated by methyltransferase dim-5 to form H3K9me3. H3K9me3, but not H3K9me2, marks chromatin regions for cytosine methylation. Methylated by set-2 to form H3K36me. H3K36me represses gene expression. Methylated by dot-1 to form H3K79me. H3K79me is required for association of SIR proteins with telomeric regions and for telomeric silencing. The COMPASS-mediated formation of H3K4me2/3 and the dot-1-mediated formation of H3K79me require H2BK123ub1. Acetylation of histone H3 leads to transcriptional activation. H3K14ac formation by gcn-5 is promoted by H3S10ph. H3K14ac can also be formed by esa-1. H3K56ac formation occurs predominantly in newly synthesized H3 molecules during G1, S and G2/M of the cell cycle and may be involved in DNA repair.

Its subcellular location is the nucleus. It localises to the chromosome. Core component of nucleosome. Nucleosomes wrap and compact DNA into chromatin, limiting DNA accessibility to the cellular machineries which require DNA as a template. Histones thereby play a central role in transcription regulation, DNA repair, DNA replication and chromosomal stability. DNA accessibility is regulated via a complex set of post-translational modifications of histones, also called histone code, and nucleosome remodeling. This chain is Histone H3 (hh3), found in Neurospora crassa (strain ATCC 24698 / 74-OR23-1A / CBS 708.71 / DSM 1257 / FGSC 987).